The primary structure comprises 137 residues: Small heat shock protein IbpA (137 aa).

The sHSP domain occupies Thr28–Lys137.

This sequence belongs to the small heat shock protein (HSP20) family. In terms of assembly, monomer. Forms homomultimers of about 100-150 subunits at optimal growth temperatures. Conformation changes to monomers at high temperatures or high ionic concentrations.

It localises to the cytoplasm. Functionally, associates with aggregated proteins, together with IbpB, to stabilize and protect them from irreversible denaturation and extensive proteolysis during heat shock and oxidative stress. Aggregated proteins bound to the IbpAB complex are more efficiently refolded and reactivated by the ATP-dependent chaperone systems ClpB and DnaK/DnaJ/GrpE. Its activity is ATP-independent. This chain is Small heat shock protein IbpA, found in Pectobacterium atrosepticum (strain SCRI 1043 / ATCC BAA-672) (Erwinia carotovora subsp. atroseptica).